The primary structure comprises 370 residues: A-type ATP synthase subunit C (370 aa).

Belongs to the V-ATPase V0D/AC39 subunit family. Has multiple subunits with at least A(3), B(3), C, D, E, F, H, I and proteolipid K(x).

It localises to the cell membrane. In terms of biological role, component of the A-type ATP synthase that produces ATP from ADP in the presence of a proton gradient across the membrane. This chain is A-type ATP synthase subunit C, found in Pyrococcus horikoshii (strain ATCC 700860 / DSM 12428 / JCM 9974 / NBRC 100139 / OT-3).